Reading from the N-terminus, the 239-residue chain is MNGLNNHASNIEIVLPELIEAVFVERVNRFVGMVQVAGHICPAHVPSSGRMRELLFPGNIVYISPMPKGRKTQYRIHLAKYDDIMVSVDSLLPNRLMYKVLSEGAISHFAMYEEVKKEVGYGESRFDIYLKGEAGRCFIEVKSVTLVDEGVAKFPDAPSERGSKHLSELTRAVGEGYRSAVIFIIQRDDARSFSPNSITDPVFSQTLSQAIEAGVEIYALACDVSLNTVRLKKYIPVQL.

This sequence belongs to the SfsA family.

The protein is Sugar fermentation stimulation protein homolog of Desulforamulus reducens (strain ATCC BAA-1160 / DSM 100696 / MI-1) (Desulfotomaculum reducens).